A 116-amino-acid chain; its full sequence is Small ribosomal subunit protein bS16 (116 aa).

It belongs to the bacterial ribosomal protein bS16 family.

In Chlamydia trachomatis serovar A (strain ATCC VR-571B / DSM 19440 / HAR-13), this protein is Small ribosomal subunit protein bS16.